A 191-amino-acid chain; its full sequence is Prostaglandin-H2 D-isomerase (191 aa).

An N-terminal signal peptide occupies residues 1–24; it reads MGALCTLWLGLVLLGVLGALQTSA. The residue at position 25 (Gln-25) is a Pyrrolidone carboxylic acid. A glycan (N-linked (GlcNAc...) asparagine) is linked at Asn-51. The Nucleophile role is filled by Cys-65. The N-linked (GlcNAc...) asparagine glycan is linked to Asn-78. Residues Cys-89 and Cys-186 are joined by a disulfide bond.

It belongs to the calycin superfamily. Lipocalin family. As to quaternary structure, monomer. Post-translationally, N- and O-glycosylated. Both N-glycosylation recognition sites are almost quantitatively occupied by N-glycans of the biantennary complex type, with a considerable proportion of structures bearing a bisecting GlcNAc. N-glycan at Asn-78: dHex1Hex5HexNAc4. Agalacto structure as well as sialylated and nonsialylated oligosaccharides bearing alpha2-3- and/or alpha2-6-linked NeuNAc are present.

It localises to the rough endoplasmic reticulum. Its subcellular location is the nucleus membrane. The protein localises to the golgi apparatus. The protein resides in the cytoplasm. It is found in the perinuclear region. It localises to the secreted. The enzyme catalyses prostaglandin H2 = prostaglandin D2. Its function is as follows. Catalyzes the conversion of PGH2 to PGD2, a prostaglandin involved in smooth muscle contraction/relaxation and a potent inhibitor of platelet aggregation. Involved in a variety of CNS functions, such as sedation, NREM sleep and PGE2-induced allodynia, and may have an anti-apoptotic role in oligodendrocytes. Binds small non-substrate lipophilic molecules, including biliverdin, bilirubin, retinal, retinoic acid and thyroid hormone, and may act as a scavenger for harmful hydrophobic molecules and as a secretory retinoid and thyroid hormone transporter. Possibly involved in development and maintenance of the blood-brain, blood-retina, blood-aqueous humor and blood-testis barrier. It is likely to play important roles in both maturation and maintenance of the central nervous system and male reproductive system. Involved in PLA2G3-dependent maturation of mast cells. PLA2G3 is secreted by immature mast cells and acts on nearby fibroblasts upstream to PTDGS to synthesize PGD2, which in turn promotes mast cell maturation and degranulation via PTGDR. This Canis lupus familiaris (Dog) protein is Prostaglandin-H2 D-isomerase (PTGDS).